A 153-amino-acid polypeptide reads, in one-letter code: Small ribosomal subunit protein uS19A (153 aa).

This sequence belongs to the universal ribosomal protein uS19 family. In terms of assembly, component of the small ribosomal subunit (SSU). Mature yeast ribosomes consist of a small (40S) and a large (60S) subunit. The 40S small subunit contains 1 molecule of ribosomal RNA (18S rRNA) and at least 33 different proteins. The large 60S subunit contains 3 rRNA molecules (25S, 5.8S and 5S rRNA) and at least 46 different proteins.

The protein localises to the cytoplasm. It is found in the nucleus. The protein resides in the nucleolus. Functionally, component of the ribosome, a large ribonucleoprotein complex responsible for the synthesis of proteins in the cell. The small ribosomal subunit (SSU) binds messenger RNAs (mRNAs) and translates the encoded message by selecting cognate aminoacyl-transfer RNA (tRNA) molecules. The large subunit (LSU) contains the ribosomal catalytic site termed the peptidyl transferase center (PTC), which catalyzes the formation of peptide bonds, thereby polymerizing the amino acids delivered by tRNAs into a polypeptide chain. The nascent polypeptides leave the ribosome through a tunnel in the LSU and interact with protein factors that function in enzymatic processing, targeting, and the membrane insertion of nascent chains at the exit of the ribosomal tunnel. uS19 is involved in the nuclear export of the small ribosomal subunit precursor. Has a role in the late stage of the assembly of pre-40S particles within the nucleus and controls their export to the cytoplasm. The polypeptide is Small ribosomal subunit protein uS19A (rps1501) (Schizosaccharomyces pombe (strain 972 / ATCC 24843) (Fission yeast)).